The sequence spans 380 residues: Gibberellin 20 oxidase 3 (380 aa).

Residues 221–321 enclose the Fe2OG dioxygenase domain; it reads DSDSIFRLNY…RKTFAFFLCP (101 aa). Residues histidine 246, aspartate 248, and histidine 302 each contribute to the Fe cation site. Arginine 312 is a catalytic residue.

The protein belongs to the iron/ascorbate-dependent oxidoreductase family. GA20OX subfamily. The cofactor is Fe(2+). It depends on L-ascorbate as a cofactor. As to expression, expressed at high level in developing siliques. Detected in seeds, roots, leaves and inflorescences. In seeds, specifically detected at the outer layer of the outer integument.

The enzyme catalyses gibberellin A12 + 2 2-oxoglutarate + 3 O2 + H(+) = gibberellin A9 + 2 succinate + 3 CO2 + 2 H2O. It carries out the reaction gibberellin A12 + 3 2-oxoglutarate + 3 O2 = gibberellin A25 + 3 succinate + 3 CO2 + H2O + H(+). It catalyses the reaction gibberellin A53 + 2 2-oxoglutarate + 3 O2 + H(+) = gibberellin A20 + 2 succinate + 3 CO2 + 2 H2O. It functions in the pathway plant hormone biosynthesis; gibberellin biosynthesis. Key oxidase enzyme in the biosynthesis of gibberellin that catalyzes the conversion of GA12 and GA53 to GA9 and GA20 respectively, via a three-step oxidation at C-20 of the GA skeleton, and GA25 is also formed as a minor product. GA53 is less effectively oxidized than GA12. The sequence is that of Gibberellin 20 oxidase 3 (GA20OX3) from Arabidopsis thaliana (Mouse-ear cress).